A 3056-amino-acid chain; its full sequence is Genome polyprotein (3056 aa).

A Peptidase S30 domain is found at 139 to 284; it reads LKGQHTIHYV…GRDMSTIREF (146 aa). Active-site for P1 proteinase activity residues include histidine 192, aspartate 201, and serine 232. Positions 335-338 match the Involved in interaction with stylet and aphid transmission motif; sequence RITC. The short motif at 593 to 595 is the Involved in virions binding and aphid transmission element; it reads PTK. The 123-residue stretch at 619–741 folds into the Peptidase C6 domain; it reads MYIAKDGFCH…ESELKYYRVG (123 aa). Catalysis depends on for helper component proteinase activity residues cysteine 627 and histidine 700. A Helicase ATP-binding domain is found at 1214–1366; it reads EIAHNDAHDI…TQYPVTLVTE (153 aa). 1227-1234 lines the ATP pocket; that stretch reads GAVGSGKS. The DECH box motif lies at 1316-1319; sequence DECH. The Helicase C-terminal domain maps to 1385–1544; sequence DMLDVCDNIL…GLPVMAEGVT (160 aa). The Nuclear localization signal motif lies at 1871–1878; it reads KKGKVRGT. Tyrosine 1893 is modified (O-(5'-phospho-RNA)-tyrosine). Positions 2022–2240 constitute a Peptidase C4 domain; it reads SLSKIGGLRD…IGWDGIKIVD (219 aa). Active-site for nuclear inclusion protein A activity residues include histidine 2067, aspartate 2102, and cysteine 2172. In terms of domain architecture, RdRp catalytic spans 2507 to 2630; that stretch reads WVYCDADGSQ…AIKPECESYL (124 aa). Positions 2788–2820 are disordered; sequence QLNAGEEKKDKRKKNEGDPNKDSEGQSVRQIVP. The segment covering 2792–2811 has biased composition (basic and acidic residues); the sequence is GEEKKDKRKKNEGDPNKDSE. Phosphothreonine is present on threonine 3040.

It belongs to the potyviridae genome polyprotein family. In terms of assembly, interacts with host eIF4E protein (via cap-binding region); this interaction mediates the translation of the VPg-viral RNA conjugates. Part of a complex that comprises VPg, RNA, host EIF4E and EIF4G; this interaction mediates the translation of the VPg-viral RNA conjugates. In terms of processing, VPg is uridylylated by the polymerase and is covalently attached to the 5'-end of the genomic RNA. This uridylylated form acts as a nucleotide-peptide primer for the polymerase. Post-translationally, potyviral RNA is expressed as two polyproteins which undergo post-translational proteolytic processing. Genome polyprotein is processed by NIa-pro, P1 and HC-pro proteinases resulting in the production of at least ten individual proteins. P3N-PIPO polyprotein is cleaved by P1 and HC-pro proteinases resulting in the production of three individual proteins. The P1 proteinase and the HC-pro cleave only their respective C-termini autocatalytically. 6K1 is essential for proper proteolytic separation of P3 from CI.

The protein localises to the host cytoplasmic vesicle. The protein resides in the host nucleus. Its subcellular location is the virion. The catalysed reaction is RNA(n) + a ribonucleoside 5'-triphosphate = RNA(n+1) + diphosphate. The enzyme catalyses Hydrolyzes glutaminyl bonds, and activity is further restricted by preferences for the amino acids in P6 - P1' that vary with the species of potyvirus, e.g. Glu-Xaa-Xaa-Tyr-Xaa-Gln-|-(Ser or Gly) for the enzyme from tobacco etch virus. The natural substrate is the viral polyprotein, but other proteins and oligopeptides containing the appropriate consensus sequence are also cleaved.. It catalyses the reaction Hydrolyzes a Gly-|-Gly bond at its own C-terminus, commonly in the sequence -Tyr-Xaa-Val-Gly-|-Gly, in the processing of the potyviral polyprotein.. Required for aphid transmission and also has proteolytic activity. Only cleaves a Gly-Gly dipeptide at its own C-terminus. Interacts with virions and aphid stylets. Acts as a suppressor of RNA-mediated gene silencing, also known as post-transcriptional gene silencing (PTGS), a mechanism of plant viral defense that limits the accumulation of viral RNAs. May have RNA-binding activity. Functionally, has helicase activity. It may be involved in replication. Its function is as follows. Indispensable for virus replication. Reduces the abundance of host transcripts related to jasmonic acid biosynthesis therefore altering the host defenses. In order to increase its own stability, decreases host protein degradation pathways. In terms of biological role, indispensable for virus replication. Mediates the cap-independent, EIF4E-dependent translation of viral genomic RNAs. Binds to the cap-binding site of host EIF4E and thus interferes with the host EIF4E-dependent mRNA export and translation. VPg-RNA directly binds EIF4E and is a template for transcription. Also forms trimeric complexes with EIF4E-EIF4G, which are templates for translation. Functionally, has RNA-binding and proteolytic activities. Its function is as follows. An RNA-dependent RNA polymerase that plays an essential role in the virus replication. In terms of biological role, involved in aphid transmission, cell-to-cell and systemis movement, encapsidation of the viral RNA and in the regulation of viral RNA amplification. The chain is Genome polyprotein from Arachis hypogaea (Peanut).